The following is a 514-amino-acid chain: Putative selenium-binding protein (514 aa).

The protein belongs to the selenium-binding protein family.

The sequence is that of Putative selenium-binding protein from Caenorhabditis briggsae.